The following is a 336-amino-acid chain: N-acetylornithine carbamoyltransferase (336 aa).

Residues 49 to 52, W77, and R112 each bind carbamoyl phosphate; that span reads SMRT. Position 144 (E144) interacts with N(2)-acetyl-L-ornithine. 148–151 provides a ligand contact to carbamoyl phosphate; it reads HPCQ. Residues K252 and L295 each coordinate N(2)-acetyl-L-ornithine. 294–295 contributes to the carbamoyl phosphate binding site; the sequence is CL. An N6-carboxylysine modification is found at K302. R322 is a binding site for carbamoyl phosphate.

This sequence belongs to the aspartate/ornithine carbamoyltransferase superfamily. AOTCase family. As to quaternary structure, homotrimer.

Its subcellular location is the cytoplasm. It catalyses the reaction N(2)-acetyl-L-ornithine + carbamoyl phosphate = N(2)-acetyl-L-citrulline + phosphate + H(+). It participates in amino-acid biosynthesis; L-arginine biosynthesis. Carboxylation at Lys-302 increases the catalytic activity of the enzyme. Functionally, catalyzes the transfer of the carbamoyl group from carbamoyl phosphate to the delta-amino group of N(2)-acetyl-L-ornithine to produce N(2)-acetyl-L-citrulline. This is a step in an alternative arginine biosynthesis pathway. The enzyme has no activity with ornithine. This chain is N-acetylornithine carbamoyltransferase, found in Xylella fastidiosa (strain 9a5c).